An 86-amino-acid chain; its full sequence is Toxin CSTX-20 (86 aa).

In terms of tissue distribution, expressed by the venom gland.

Its subcellular location is the secreted. The sequence is that of Toxin CSTX-20 from Cupiennius salei (American wandering spider).